We begin with the raw amino-acid sequence, 349 residues long: Alcohol dehydrogenase 1 (349 aa).

Residues Cys46, His69, Cys100, Cys103, Cys106, Cys114, and Cys156 each contribute to the Zn(2+) site. Residues Gly180–Gly186, Asp204, Lys208, Val270–Leu272, and Arg342 contribute to the NAD(+) site.

Belongs to the zinc-containing alcohol dehydrogenase family. Homotetramer. Zn(2+) is required as a cofactor.

It carries out the reaction a primary alcohol + NAD(+) = an aldehyde + NADH + H(+). The enzyme catalyses a secondary alcohol + NAD(+) = a ketone + NADH + H(+). This Caenorhabditis elegans protein is Alcohol dehydrogenase 1.